The following is a 519-amino-acid chain: Phosphate acetyltransferase (519 aa).

Residues Ala196–Tyr519 form a phosphate acetyltransferase region.

This sequence in the N-terminal section; belongs to the CobB/CobQ family. It in the C-terminal section; belongs to the phosphate acetyltransferase and butyryltransferase family.

Its subcellular location is the cytoplasm. It catalyses the reaction acetyl-CoA + phosphate = acetyl phosphate + CoA. The protein operates within metabolic intermediate biosynthesis; acetyl-CoA biosynthesis; acetyl-CoA from acetate: step 2/2. The polypeptide is Phosphate acetyltransferase (pta) (Helicobacter pylori (strain J99 / ATCC 700824) (Campylobacter pylori J99)).